Reading from the N-terminus, the 289-residue chain is ATP synthase gamma chain (289 aa).

The protein belongs to the ATPase gamma chain family. F-type ATPases have 2 components, CF(1) - the catalytic core - and CF(0) - the membrane proton channel. CF(1) has five subunits: alpha(3), beta(3), gamma(1), delta(1), epsilon(1). CF(0) has three main subunits: a, b and c.

The protein resides in the cell membrane. In terms of biological role, produces ATP from ADP in the presence of a proton gradient across the membrane. The gamma chain is believed to be important in regulating ATPase activity and the flow of protons through the CF(0) complex. The polypeptide is ATP synthase gamma chain (Lactococcus lactis subsp. cremoris (strain MG1363)).